The primary structure comprises 367 residues: MSFNFTWPEFSAEFYEYAVQTLTTALNRGQKPKSIVGDIHVKGLHMGRVPPELEILEIGDLSRERFRGIFRFVYAGDAHLEFSTGVQANPLARGSEDHGIFSGPMTSRGMLFAASPLTVPMRVCLSDFKLRAIVVLVVSRTKGITLVFKNDPLESVKVSSTFDSVGVIQRYLQEEIEGQLREMFRADLPSIIHRLSQDWLRTESKEKVVPTPSAQPAKPAMPPVPSDVWPSHHTADVPLSVLALEEAAPSAYASHLTKLDTASQSSQGLKDLVQPAGSHPAGARTFHTTSRVRVPSSLESNAPPTPIALSSPGGLDVAGHLAELLRANHTLSPYTPHPRLVALRTMPAHRPRSSRVHARQKRAFHLS.

The 197-residue stretch at 1–197 (MSFNFTWPEF…LPSIIHRLSQ (197 aa)) folds into the SMP-LTD domain. Disordered regions lie at residues 267 to 311 (QGLK…ALSS) and 347 to 367 (PAHRPRSSRVHARQKRAFHLS). Over residues 286-302 (FHTTSRVRVPSSLESNA) the composition is skewed to polar residues.

It belongs to the MDM34 family. As to quaternary structure, component of the ER-mitochondria encounter structure (ERMES) or MDM complex, composed of MMM1, MDM10, MDM12 and MDM34.

It is found in the mitochondrion outer membrane. Its function is as follows. Component of the ERMES/MDM complex, which serves as a molecular tether to connect the endoplasmic reticulum (ER) and mitochondria. Components of this complex are involved in the control of mitochondrial shape and protein biogenesis, and function in nonvesicular lipid trafficking between the ER and mitochondria. MDM34 is required for the interaction of the ER-resident membrane protein MMM1 and the outer mitochondrial membrane-resident beta-barrel protein MDM10. This is Mitochondrial distribution and morphology protein 34 from Malassezia globosa (strain ATCC MYA-4612 / CBS 7966) (Dandruff-associated fungus).